The chain runs to 490 residues: Tektin-3 (490 aa).

Residues Thr-7, Thr-9, and Thr-10 are each glycosylated (O-linked (GalNAc...) threonine). N-linked (GlcNAc...) asparagine glycans are attached at residues Asn-41, Asn-86, Asn-103, Asn-111, Asn-276, and Asn-344. The stretch at 424–451 forms a coiled coil; that stretch reads VHEVDDTIQTLQQRLRDAEDTLQSLVHI.

It belongs to the tektin family. In terms of assembly, microtubule inner protein component of sperm flagellar doublet microtubules. Interacts with TEKT1, TEKT2, TEKT4 and TEKT5. Interacts with CCDC38. In terms of processing, N- and O-glycosylated. May be proteolytically processed during the epididymal transit of spermatozoa. Post-translationally, ubiquitinated, leading to its degradation. Deubiquitinated by USP16, promoting its stability. Expressed in spermatozoa. Expressed in airway epithelial cells.

Its subcellular location is the cytoplasm. It localises to the cytoskeleton. The protein localises to the cilium axoneme. It is found in the flagellum axoneme. The protein resides in the cytoplasmic vesicle. Its subcellular location is the secretory vesicle. It localises to the acrosome outer membrane. Its function is as follows. Microtubule inner protein (MIP) part of the dynein-decorated doublet microtubules (DMTs) in cilia and flagellar axoneme. Forms filamentous polymers in the walls of ciliary and flagellar microtubules. Required for normal sperm mobility. This Homo sapiens (Human) protein is Tektin-3 (TEKT3).